We begin with the raw amino-acid sequence, 123 residues long: Small ribosomal subunit protein uS12cz/uS12cy (123 aa).

The protein belongs to the universal ribosomal protein uS12 family. As to quaternary structure, part of the 30S ribosomal subunit.

It localises to the plastid. The protein localises to the chloroplast. Functionally, with S4 and S5 plays an important role in translational accuracy. Located at the interface of the 30S and 50S subunits. The polypeptide is Small ribosomal subunit protein uS12cz/uS12cy (rps12-A) (Coffea arabica (Arabian coffee)).